The primary structure comprises 214 residues: 7-cyano-7-deazaguanine synthase (214 aa).

10–20 (FSGGQDSTTCL) serves as a coordination point for ATP. Positions 184, 193, 196, and 199 each coordinate Zn(2+).

This sequence belongs to the QueC family. In terms of assembly, homodimer. Zn(2+) is required as a cofactor.

The catalysed reaction is 7-carboxy-7-deazaguanine + NH4(+) + ATP = 7-cyano-7-deazaguanine + ADP + phosphate + H2O + H(+). Its pathway is purine metabolism; 7-cyano-7-deazaguanine biosynthesis. Catalyzes the ATP-dependent conversion of 7-carboxy-7-deazaguanine (CDG) to 7-cyano-7-deazaguanine (preQ(0)). The polypeptide is 7-cyano-7-deazaguanine synthase (Exiguobacterium sp. (strain ATCC BAA-1283 / AT1b)).